A 246-amino-acid chain; its full sequence is Orotidine 5'-phosphate decarboxylase (246 aa).

Substrate contacts are provided by residues Asp22, Lys44, 71-80 (DLKFHDIPNT), Thr131, Arg192, Gln201, Gly221, and Arg222. The active-site Proton donor is Lys73.

It belongs to the OMP decarboxylase family. Type 1 subfamily. In terms of assembly, homodimer.

It carries out the reaction orotidine 5'-phosphate + H(+) = UMP + CO2. It functions in the pathway pyrimidine metabolism; UMP biosynthesis via de novo pathway; UMP from orotate: step 2/2. In terms of biological role, catalyzes the decarboxylation of orotidine 5'-monophosphate (OMP) to uridine 5'-monophosphate (UMP). This chain is Orotidine 5'-phosphate decarboxylase, found in Yersinia enterocolitica serotype O:8 / biotype 1B (strain NCTC 13174 / 8081).